Consider the following 566-residue polypeptide: Transcription factor opdL (566 aa).

Positions Cys-15–Cys-45 form a DNA-binding region, zn(2)-C6 fungal-type.

It localises to the nucleus. In terms of biological role, transcription factor; part of the gene cluster that mediates the biosynthesis of oxopyrrolidines, polyketide-amino acid hybrid compounds with feature structures of tetramic acid. The protein is Transcription factor opdL of Penicillium oxalicum (strain 114-2 / CGMCC 5302) (Penicillium decumbens).